Here is a 165-residue protein sequence, read N- to C-terminus: MAKNNKKIKTSLNIIALNKKARHNYFIEQTLEAGLSLEGWEVKSLRDSKVQIKESYVILKNNELFLFGAHISPLKSVSTHVNSDSTRTRKLLLNRLEINRIKDNINQKGATIVPLKLYWARGKVKLEIGMAKGKKSHDKRQDIKLKDWQRDKQRTLKETNKIFNF.

The protein belongs to the SmpB family.

The protein resides in the cytoplasm. In terms of biological role, required for rescue of stalled ribosomes mediated by trans-translation. Binds to transfer-messenger RNA (tmRNA), required for stable association of tmRNA with ribosomes. tmRNA and SmpB together mimic tRNA shape, replacing the anticodon stem-loop with SmpB. tmRNA is encoded by the ssrA gene; the 2 termini fold to resemble tRNA(Ala) and it encodes a 'tag peptide', a short internal open reading frame. During trans-translation Ala-aminoacylated tmRNA acts like a tRNA, entering the A-site of stalled ribosomes, displacing the stalled mRNA. The ribosome then switches to translate the ORF on the tmRNA; the nascent peptide is terminated with the 'tag peptide' encoded by the tmRNA and targeted for degradation. The ribosome is freed to recommence translation, which seems to be the essential function of trans-translation. This chain is SsrA-binding protein, found in Ruthia magnifica subsp. Calyptogena magnifica.